A 227-amino-acid polypeptide reads, in one-letter code: ATP phosphoribosyltransferase (227 aa).

Belongs to the ATP phosphoribosyltransferase family. Short subfamily. In terms of assembly, heteromultimer composed of HisG and HisZ subunits.

It localises to the cytoplasm. It carries out the reaction 1-(5-phospho-beta-D-ribosyl)-ATP + diphosphate = 5-phospho-alpha-D-ribose 1-diphosphate + ATP. The protein operates within amino-acid biosynthesis; L-histidine biosynthesis; L-histidine from 5-phospho-alpha-D-ribose 1-diphosphate: step 1/9. Functionally, catalyzes the condensation of ATP and 5-phosphoribose 1-diphosphate to form N'-(5'-phosphoribosyl)-ATP (PR-ATP). Has a crucial role in the pathway because the rate of histidine biosynthesis seems to be controlled primarily by regulation of HisG enzymatic activity. This is ATP phosphoribosyltransferase from Bordetella avium (strain 197N).